We begin with the raw amino-acid sequence, 237 residues long: MDYFEIMDTVCKDLGLNFNQEKYNKFIKYKDILKLWNDKMNLTAIVDDKDIIKKHFIDSIRVFKFLPLKDAKSIIDVGTGAGFPGIPIKIIKPEVKLILLDSLNKRIKFLNQVVLSIKLNDVTCIHGRAEDCARKIEYRENNDVVVSRAVANLTVLSEFCIPYIKVGGYFIAMKGPSVEDEITESKNAINILGGKIEDIIKVEDDEFNHNLVVIKKITHTSDKYPRKAGIVSKNPLR.

Residues Gly-78, Phe-83, 129 to 130 (AE), and Arg-148 each bind S-adenosyl-L-methionine.

Belongs to the methyltransferase superfamily. RNA methyltransferase RsmG family.

It localises to the cytoplasm. Its function is as follows. Specifically methylates the N7 position of a guanine in 16S rRNA. This is Ribosomal RNA small subunit methyltransferase G from Clostridium kluyveri (strain ATCC 8527 / DSM 555 / NBRC 12016 / NCIMB 10680 / K1).